The following is a 298-amino-acid chain: Acetylglutamate kinase (298 aa).

Substrate contacts are provided by residues glycine 69–glycine 70, arginine 91, and asparagine 196.

The protein belongs to the acetylglutamate kinase family. ArgB subfamily.

The protein resides in the cytoplasm. The catalysed reaction is N-acetyl-L-glutamate + ATP = N-acetyl-L-glutamyl 5-phosphate + ADP. Its pathway is amino-acid biosynthesis; L-arginine biosynthesis; N(2)-acetyl-L-ornithine from L-glutamate: step 2/4. Catalyzes the ATP-dependent phosphorylation of N-acetyl-L-glutamate. The chain is Acetylglutamate kinase from Nitrobacter hamburgensis (strain DSM 10229 / NCIMB 13809 / X14).